Consider the following 559-residue polypeptide: Glycerol kinase (559 aa).

Thr-20 lines the ADP pocket. Residues Thr-20, Ser-21, and Ser-22 each contribute to the ATP site. Sn-glycerol 3-phosphate is bound at residue Thr-20. Arg-24 provides a ligand contact to ADP. Residues Arg-94, Glu-95, and Tyr-148 each coordinate sn-glycerol 3-phosphate. The glycerol site is built by Arg-94, Glu-95, and Tyr-148. Residue Gly-252 participates in beta-D-fructose 1,6-bisphosphate binding. Residue Asp-265 coordinates sn-glycerol 3-phosphate. The glycerol site is built by Asp-265 and Gln-266. ADP is bound by residues Thr-287, Gly-332, Gly-433, and Asn-437. ATP contacts are provided by Thr-287, Gly-332, and Gly-433. Glu-501 provides a ligand contact to Zn(2+). Residues 532 to 552 (IFCSLPLGFFIVSSVVMLIGA) traverse the membrane as a helical segment.

The protein belongs to the FGGY kinase family.

It is found in the mitochondrion outer membrane. The protein localises to the nucleus. Its subcellular location is the cytoplasm. The protein resides in the cytosol. It carries out the reaction glycerol + ATP = sn-glycerol 3-phosphate + ADP + H(+). The protein operates within polyol metabolism; glycerol degradation via glycerol kinase pathway; sn-glycerol 3-phosphate from glycerol: step 1/1. Functionally, kinase that plays a key role in glycerol metabolism, catalyzing its phosphorylation to produce sn-glycerol 3-phosphate. Sn-glycerol 3-phosphate is a crucial intermediate in various metabolic pathways, such as the synthesis of glycerolipids and triglycerides, glycogenesis, glycolysis and gluconeogenesis. The polypeptide is Glycerol kinase (Bos taurus (Bovine)).